The sequence spans 166 residues: Putative methyltransferase Rv1506c (166 aa).

Belongs to the methyltransferase superfamily.

Functionally, probably plays a role in host phagosome maturation arrest, as well as a role in the synthesis of acyltrehalose-containing glycolipids. This chain is Putative methyltransferase Rv1506c, found in Mycobacterium tuberculosis (strain ATCC 25618 / H37Rv).